The following is a 1960-amino-acid chain: Myosin-9 (1960 aa).

Position 2 is an N-acetylalanine (Ala-2). Residues 2–838 (AQQAADKYLY…RLFTKVKPLL (837 aa)) form a mediates interaction with LIMCH1 region. Lys-8 bears the N6-acetyllysine mark. Tyr-11 carries the phosphotyrosine modification. One can recognise a Myosin N-terminal SH3-like domain in the interval 27–77 (AAKKLVWVPSSKNGFEPASLKEEVGEEAIVELVENGKKVKVNKDDIQKMNP). The Myosin motor domain occupies 81-776 (SKVEDMAELT…VLAHLEEERD (696 aa)). The residue at position 102 (Lys-102) is an N6-acetyllysine. ATP is bound at residue 174-181 (GESGAGKT). 3 positions are modified to N6-acetyllysine: Lys-299, Lys-435, and Lys-613. Ser-628 carries the post-translational modification Phosphoserine. The tract at residues 654–676 (LAKLMATLRNTNPNFVRCIIPNH) is actin-binding. Tyr-754 is modified (phosphotyrosine). Residues 779 to 808 (ITDVIIGFQACCRGYLARKAFAKRQQQLTA) form the IQ domain. The stretch at 841-1926 (IRHEDELLAK…LKNKLRRGDL (1086 aa)) forms a coiled coil. N6-succinyllysine is present on Lys-850. 3 positions are modified to N6-acetyllysine: Lys-860, Lys-975, and Lys-1024. Over residues 1035–1055 (RLRREEKQRQELEKTRRKLEG) the composition is skewed to basic and acidic residues. A disordered region spans residues 1035 to 1057 (RLRREEKQRQELEKTRRKLEGDS). Position 1114 is a phosphoserine (Ser-1114). The segment at 1117-1167 (QEDLESERASRNKAEKQKRDLGEELEALKTELEDTLDSTAAQQELRSKREQ) is disordered. Residues 1122-1148 (SERASRNKAEKQKRDLGEELEALKTEL) show a composition bias toward basic and acidic residues. Residues Lys-1234 and Lys-1249 each carry the N6-acetyllysine modification. The tract at residues 1327 to 1352 (LSTKLKQMEDEKNSFREQLEEEEEAK) is disordered. Basic and acidic residues predominate over residues 1332-1352 (KQMEDEKNSFREQLEEEEEAK). N6-acetyllysine is present on residues Lys-1357, Lys-1392, Lys-1404, Lys-1410, Lys-1459, and Lys-1638. Lys-1669 is subject to N6-succinyllysine. Ser-1714 is subject to Phosphoserine. Positions 1768 to 1788 (LERSHAQKNENARQQLERQNK) are disordered. Residues Lys-1793, Lys-1802, and Lys-1845 each carry the N6-acetyllysine modification. The disordered stretch occupies residues 1877 to 1908 (RQLEEAEEEAQRANASRRKLQRELEDATETAD). Arg-1923 bears the Omega-N-methylarginine mark. Thr-1939 is modified (phosphothreonine). The disordered stretch occupies residues 1939-1960 (TGDCSDEEVDGKADGADAKAAE). Ser-1943 is modified (phosphoserine). Basic and acidic residues predominate over residues 1948–1960 (DGKADGADAKAAE).

It belongs to the TRAFAC class myosin-kinesin ATPase superfamily. Myosin family. In terms of assembly, myosin is a hexameric protein that consists of 2 heavy chain subunits (MHC), 2 alkali light chain subunits (MLC) and 2 regulatory light chain subunits (MLC-2). Interacts with RASIP1. Interacts with DDR1. Interacts with PDLIM2. Interacts with SVIL. Interacts with HTRA3. Interacts with Myo7a. Interacts with CFAP95. Interacts with LIMCH1; independently of the integration of MYH9 into the myosin complex. Interacts with RAB3A. Interacts with ZBED4. Interacts with S100A4; this interaction increases cell motility. In terms of processing, ISGylated. Post-translationally, ubiquitination.

It is found in the cytoplasm. It localises to the cytoskeleton. The protein localises to the cell cortex. Its subcellular location is the cytoplasmic vesicle. The protein resides in the secretory vesicle. It is found in the cortical granule. In terms of biological role, cellular myosin that appears to play a role in cytokinesis, cell shape, and specialized functions such as secretion and capping. Required for cortical actin clearance prior to oocyte exocytosis. Promotes cell motility in conjunction with S100A4. During cell spreading, plays an important role in cytoskeleton reorganization, focal contact formation (in the margins but not the central part of spreading cells), and lamellipodial retraction; this function is mechanically antagonized by MYH10. The sequence is that of Myosin-9 (Myh9) from Mus musculus (Mouse).